Consider the following 484-residue polypeptide: Protein nucleotidyltransferase YdiU (484 aa).

Positions 81, 83, 84, 103, 115, 116, 166, and 173 each coordinate ATP. The Proton acceptor role is filled by Asp-244. Mg(2+) contacts are provided by Asn-245 and Asp-254. Asp-254 is an ATP binding site.

It belongs to the SELO family. It depends on Mg(2+) as a cofactor. The cofactor is Mn(2+).

It carries out the reaction L-seryl-[protein] + ATP = 3-O-(5'-adenylyl)-L-seryl-[protein] + diphosphate. The enzyme catalyses L-threonyl-[protein] + ATP = 3-O-(5'-adenylyl)-L-threonyl-[protein] + diphosphate. The catalysed reaction is L-tyrosyl-[protein] + ATP = O-(5'-adenylyl)-L-tyrosyl-[protein] + diphosphate. It catalyses the reaction L-histidyl-[protein] + UTP = N(tele)-(5'-uridylyl)-L-histidyl-[protein] + diphosphate. It carries out the reaction L-seryl-[protein] + UTP = O-(5'-uridylyl)-L-seryl-[protein] + diphosphate. The enzyme catalyses L-tyrosyl-[protein] + UTP = O-(5'-uridylyl)-L-tyrosyl-[protein] + diphosphate. Nucleotidyltransferase involved in the post-translational modification of proteins. It can catalyze the addition of adenosine monophosphate (AMP) or uridine monophosphate (UMP) to a protein, resulting in modifications known as AMPylation and UMPylation. The polypeptide is Protein nucleotidyltransferase YdiU (Shewanella oneidensis (strain ATCC 700550 / JCM 31522 / CIP 106686 / LMG 19005 / NCIMB 14063 / MR-1)).